A 685-amino-acid polypeptide reads, in one-letter code: Multicopper oxidase VdtB (685 aa).

A signal peptide spans 1-17 (MPAYLLLLACNVLLVLG). Plastocyanin-like domains lie at 26–139 (LTWE…IRRK) and 168–368 (IMML…RYKN). Residue N71 is glycosylated (N-linked (GlcNAc...) asparagine). H75, H77, H119, and H121 together coordinate Cu cation. 5 N-linked (GlcNAc...) asparagine glycosylation sites follow: N178, N229, N253, N432, and N475. Residues 466–585 (DDDLIIRTQN…DNGMAMAILD (120 aa)) enclose the Plastocyanin-like 3 domain. A Cu cation-binding site is contributed by H500. A glycan (N-linked (GlcNAc...) asparagine) is linked at N517. The helical transmembrane segment at 627–647 (SLVWAGGAAVVLLSLFIGGLW) threads the bilayer.

Belongs to the multicopper oxidase family.

The protein localises to the membrane. It carries out the reaction 4 semiviriditoxin + O2 = 2 (M)-viriditoxin + 2 H2O. Its pathway is secondary metabolite biosynthesis. Functionally, multicopper oxidase; part of the gene cluster that mediates the biosynthesis of viriditoxin, one of the 'classical' secondary metabolites produced by fungi and that has antibacterial activity. The first step is performed by the polyketide synthase VdtA which condenses one acetyl-CoA and 6 malonyl-CoA units to form the heptaketide monomer backbone of viriditoxin. The product of VdtA is then O-methylated on C7 by the O-methyltransferase VdtC. The O-methyl group is important for the stereoselective coupling of the monomers at the final step of viriditoxin biosynthesis. The short-chain dehydrogenase/reductase VdtF then acts as a stereospecific reductase converting the pyrone to dihydropyrone via the reduction of the C3-C4 double bond. The FAD-binding monooxygenase VdtE then converts the ketone group into a methyl-ester group to yield semi-viriditoxin. Finally, the laccase VdtB is involved in dimerization of 2 semi-viriditoxin molecules to yield the final viriditoxin. VdtB is responsible for the regioselective 6,6'-coupling of semi-viriditoxin, which yields (M)-viriditoxin and (P)-viriditoxin at a ratio of 1:2. The non-catalytic carboxylesterase-like protein VdtD affects the stereochemistical outcome of the coupling. The highly reducing polyketide synthase VdtX is not involved in viriditoxin synthesis, but might possibly play a role in the production of additional metabolites not identified yet. This Byssochlamys spectabilis (Paecilomyces variotii) protein is Multicopper oxidase VdtB.